Reading from the N-terminus, the 65-residue chain is U15-hexatoxin-Mg1a (65 aa).

In terms of processing, contains 4 disulfide bonds. In terms of tissue distribution, expressed by the venom gland.

It is found in the secreted. Its function is as follows. Intrathorax injection into crickets causes paralysis prolonged for more than 60 minutes, followed by recovery. The polypeptide is U15-hexatoxin-Mg1a (Macrothele gigas (Japanese funnel web spider)).